The primary structure comprises 311 residues: tRNA-cytidine(32) 2-sulfurtransferase (311 aa).

The PP-loop motif signature appears at 47–52; that stretch reads SGGKDS. [4Fe-4S] cluster is bound by residues cysteine 122, cysteine 125, and cysteine 213.

This sequence belongs to the TtcA family. Homodimer. It depends on Mg(2+) as a cofactor. [4Fe-4S] cluster is required as a cofactor.

The protein resides in the cytoplasm. The enzyme catalyses cytidine(32) in tRNA + S-sulfanyl-L-cysteinyl-[cysteine desulfurase] + AH2 + ATP = 2-thiocytidine(32) in tRNA + L-cysteinyl-[cysteine desulfurase] + A + AMP + diphosphate + H(+). The protein operates within tRNA modification. In terms of biological role, catalyzes the ATP-dependent 2-thiolation of cytidine in position 32 of tRNA, to form 2-thiocytidine (s(2)C32). The sulfur atoms are provided by the cysteine/cysteine desulfurase (IscS) system. The chain is tRNA-cytidine(32) 2-sulfurtransferase from Escherichia coli (strain K12 / MC4100 / BW2952).